The primary structure comprises 161 residues: Phosphopantetheine adenylyltransferase (161 aa).

Ser9 serves as a coordination point for substrate. ATP contacts are provided by residues 9–10 (SF) and His17. Substrate-binding residues include Lys41, Thr73, and Arg87. ATP contacts are provided by residues 88-90 (GLR), Glu98, and 123-129 (FAHISST).

This sequence belongs to the bacterial CoaD family. As to quaternary structure, homohexamer. Requires Mg(2+) as cofactor.

Its subcellular location is the cytoplasm. The catalysed reaction is (R)-4'-phosphopantetheine + ATP + H(+) = 3'-dephospho-CoA + diphosphate. It functions in the pathway cofactor biosynthesis; coenzyme A biosynthesis; CoA from (R)-pantothenate: step 4/5. Reversibly transfers an adenylyl group from ATP to 4'-phosphopantetheine, yielding dephospho-CoA (dPCoA) and pyrophosphate. This Chloroflexus aggregans (strain MD-66 / DSM 9485) protein is Phosphopantetheine adenylyltransferase.